Here is a 606-residue protein sequence, read N- to C-terminus: DNA primase (606 aa).

The CHC2-type zinc-finger motif lies at Cys-40–Cys-64. Positions Lys-256 to Gly-349 constitute a Toprim domain. Mg(2+)-binding residues include Glu-262, Asp-307, and Asp-309. The interval Val-429–Leu-451 is disordered. Over residues Pro-441–Leu-451 the composition is skewed to pro residues.

This sequence belongs to the DnaG primase family. Monomer. Interacts with DnaB. Zn(2+) serves as cofactor. Requires Mg(2+) as cofactor.

It catalyses the reaction ssDNA + n NTP = ssDNA/pppN(pN)n-1 hybrid + (n-1) diphosphate.. Its function is as follows. RNA polymerase that catalyzes the synthesis of short RNA molecules used as primers for DNA polymerase during DNA replication. The chain is DNA primase from Myxococcus xanthus.